The chain runs to 337 residues: Probable deoxyhypusine synthase (337 aa).

Lys-308 serves as the catalytic Nucleophile.

This sequence belongs to the deoxyhypusine synthase family. NAD(+) is required as a cofactor.

It carries out the reaction [eIF5A protein]-L-lysine + spermidine = [eIF5A protein]-deoxyhypusine + propane-1,3-diamine. Its pathway is protein modification; eIF5A hypusination. Catalyzes the NAD-dependent oxidative cleavage of spermidine and the subsequent transfer of the butylamine moiety of spermidine to the epsilon-amino group of a specific lysine residue of the eIF-5A precursor protein to form the intermediate deoxyhypusine residue. This is Probable deoxyhypusine synthase from Thermococcus kodakarensis (strain ATCC BAA-918 / JCM 12380 / KOD1) (Pyrococcus kodakaraensis (strain KOD1)).